An 898-amino-acid chain; its full sequence is Chloride channel protein 2 (898 aa).

The Cytoplasmic portion of the chain corresponds to 1 to 90 (MAAPAAAAVE…RCHKFLVSRV (90 aa)). An essential for channel gating by both voltage and cell volume region spans residues 19–37 (QYEQTLMYGRYTQDLGAFA). Position 23 is a phosphothreonine (threonine 23). Residues 39–52 (EEAARIRLGGPEPW) form a modulates channel gating by both voltage and cell volume region. The next 2 helical transmembrane spans lie at 91-124 (GEDW…AQQW) and 133-158 (LLLQ…TQIL). A Selectivity filter part_1 motif is present at residues 164-168 (GSGIP). Residues 167–174 (IPEMKTIL) constitute an intramembrane region (helical). 2 helical membrane-spanning segments follow: residues 183–201 (LTLK…ALGS) and 208–226 (EGPF…SKFL). Residues 206–210 (GKEGP) carry the Selectivity filter part_2 motif. Intramembrane regions (helical) lie at residues 242 to 254 (MLAA…VGCC) and 258 to 266 (PIGGVLFSI). 5 helical membrane passes run 278–298 (YWRG…LAVW), 324–352 (LPAF…VQVM), 361–380 (FLMR…ISTL), 432–452 (ANVF…SALA), and 460–483 (GAFM…MAAW). Residues 460–464 (GAFMP) carry the Selectivity filter part_3 motif. Positions 500 to 514 (GGYAVVGAAALAGAV) form an intramembrane region, helical. Residues 515–516 (TH) constitute an intramembrane region (note=Loop between two helices). Positions 517 to 528 (TVSTAVIVFELT) form an intramembrane region, helical. The segment at residues 529 to 533 (GQIAH) is an intramembrane region (note=Loop between two helices). The helical transmembrane segment at 534 to 551 (ILPVMIAVILANAVAQSL) threads the bilayer. Topologically, residues 552–898 (QPSLYDSIIR…SPSDSDDKCQ (347 aa)) are cytoplasmic. In terms of domain architecture, CBS 1 spans 587-645 (MVRDVPHVALSCTFRDLRLALHRTKGRTLALVESPESMILLGSIERTQVVALLAAQLSP). A compositionally biased stretch (basic residues) spans 647-658 (RRRQSKQKRRVA). Positions 647 to 675 (RRRQSKQKRRVAHTSPPSCQESPPSPETS) are disordered. Serine 710 bears the Phosphoserine mark. The disordered stretch occupies residues 726–766 (FCGSPPPEAASESEKSESSEKRKSKRVRISLASDSDLEGEM). Residues 737–746 (ESEKSESSEK) show a composition bias toward basic and acidic residues. Phosphoserine is present on serine 758. In terms of domain architecture, CBS 2 spans 790-850 (IDPAPFQLVE…GSVTAQGVKV (61 aa)). The short motif at 812–813 (LL) is the Basolateral membrane sorting element. The disordered stretch occupies residues 856–898 (SFRDSATSSSDTETTEVHALWGPRSRHGLPREGSPSDSDDKCQ).

Belongs to the chloride channel (TC 2.A.49) family. ClC-2/CLCN2 subfamily. Homodimer. Interacts with auxiliary subunit HEPACAM. Phosphorylated. Activated by dephosphorylation. Ubiquitously expressed.

Its subcellular location is the cell membrane. It localises to the basolateral cell membrane. The protein localises to the cell projection. It is found in the dendritic spine membrane. The protein resides in the axon. The enzyme catalyses chloride(in) = chloride(out). The catalysed reaction is thiocyanate(in) = thiocyanate(out). It carries out the reaction bromide(in) = bromide(out). It catalyses the reaction nitrate(in) = nitrate(out). The enzyme catalyses iodide(out) = iodide(in). With respect to regulation, common gate kinetics are down-regulated by intracellular ATP. Inhibited by AK-42, a derivative of meclofenamate. Inhibited by Cd(2+). Inhibited by Zn(2+) and PKC activation. Inhibited at acidic pH. CCLN2:HEPACAM channel conductance is up-regulated upon hypo-osmolarity. Functionally, voltage-gated and osmosensitive chloride channel. Forms a homodimeric channel where each subunit has its own ion conduction pathway. Conducts double-barreled currents controlled by two types of gates, two fast glutamate gates that control each subunit independently and a slow common gate that opens and shuts off both subunits simultaneously. Displays inward rectification currents activated upon membrane hyperpolarization and extracellular hypotonicity. Contributes to chloride conductance involved in neuron excitability. In hippocampal neurons, generates a significant part of resting membrane conductance and provides an additional chloride efflux pathway to prevent chloride accumulation in dendrites upon GABA receptor activation. In glia, associates with the auxiliary subunit HEPACAM/GlialCAM at astrocytic processes and myelinated fiber tracts where it may regulate transcellular chloride flux buffering extracellular chloride and potassium concentrations. Regulates aldosterone production in adrenal glands. The opening of CLCN2 channels at hyperpolarized membrane potentials in the glomerulosa causes cell membrane depolarization, activation of voltage-gated calcium channels and increased expression of aldosterone synthase, the rate-limiting enzyme for aldosterone biosynthesis. Contributes to chloride conductance in retinal pigment epithelium involved in phagocytosis of shed photoreceptor outer segments and photoreceptor renewal. Conducts chloride currents at the basolateral membrane of epithelial cells with a role in chloride reabsorption rather than secretion. Permeable to small monovalent anions with chloride &gt; thiocyanate &gt; bromide &gt; nitrate &gt; iodide ion selectivity. This Oryctolagus cuniculus (Rabbit) protein is Chloride channel protein 2 (CLCN2).